A 398-amino-acid chain; its full sequence is Serpin-Z2B (398 aa).

The RCL stretch occupies residues 343-367 (GTEAAATTIAKVVLRQAPPPSVLDF).

It belongs to the serpin family.

Inhibits chymotrypsin, cathepsin G and trypsin in vitro. The protein is Serpin-Z2B of Triticum aestivum (Wheat).